Reading from the N-terminus, the 293-residue chain is Undecaprenyl-diphosphatase (293 aa).

7 helical membrane passes run I3 to P23, K43 to F63, L85 to I105, L109 to A129, V203 to E223, I238 to L258, and F269 to I289.

It belongs to the UppP family.

It localises to the cell inner membrane. It carries out the reaction di-trans,octa-cis-undecaprenyl diphosphate + H2O = di-trans,octa-cis-undecaprenyl phosphate + phosphate + H(+). In terms of biological role, catalyzes the dephosphorylation of undecaprenyl diphosphate (UPP). Confers resistance to bacitracin. In Ralstonia nicotianae (strain ATCC BAA-1114 / GMI1000) (Ralstonia solanacearum), this protein is Undecaprenyl-diphosphatase.